A 48-amino-acid polypeptide reads, in one-letter code: M-oxotoxin-Ot1c (48 aa).

The protein localises to the secreted. The protein resides in the target cell membrane. Functionally, disrupts cell membranes, particularly those rich in phosphocholine, through formation of pores. Has antimicrobial activity, hemolytic activity and insecticidal activity. This chain is M-oxotoxin-Ot1c, found in Oxyopes takobius (Lynx spider).